Consider the following 932-residue polypeptide: Lon protease homolog 2, peroxisomal (932 aa).

The region spanning 11-260 (LSLVPLPKGS…RVVDILNKQN (250 aa)) is the Lon N-terminal domain. Positions 298-328 (RRGIPGASGTPPPGLGGRNNEADEKESNELD) are disordered. The segment covering 317–328 (NEADEKESNELD) has biased composition (basic and acidic residues). Residue 486–493 (GPPGTGKT) participates in ATP binding. A Lon proteolytic domain is found at 729 to 916 (HGRPGVVTGL…WEAIRHIWPD (188 aa)). Residues serine 822 and lysine 865 contribute to the active site. Residues 930–932 (SRL) carry the Microbody targeting signal motif.

The protein belongs to the peptidase S16 family.

Its subcellular location is the peroxisome matrix. The enzyme catalyses Hydrolysis of proteins in presence of ATP.. In terms of biological role, ATP-dependent serine protease that mediates the selective degradation of misfolded and unassembled polypeptides in the peroxisomal matrix. Necessary for type 2 peroxisome targeting signal (PTS2)-containing protein processing and facilitates peroxisome matrix protein import. The polypeptide is Lon protease homolog 2, peroxisomal (Emericella nidulans (strain FGSC A4 / ATCC 38163 / CBS 112.46 / NRRL 194 / M139) (Aspergillus nidulans)).